The sequence spans 684 residues: MKRSFDASHGQLEKQSRPRQVPTSCHFCRTKKLKCDRRFPCSNCRARRLSCVPFSDRSQAASLDLPGAGPSSTVSNEELSENINELKARLQRLEELISVNAEEKLDSKGPTSFVTSKGGYGEDVEASKSMNSLEMDAFEHQPLHSNSEERIAQLFASSFVSIIAPAIRLVIDQPTLSLLPSRKQAERLFDYFADQVVVFYYFIHVPTVRSMLDTVYTHLENKRQPQHDHLALLSTVFALSAYFGSSSSRFPFNGAEAKMLCYRWISVAQQALCAANYIVQPTVETLQSVILIAAYLVPNLGSMSIFRVLMASALQGALQLSLHQIDSPANQRRRQNATVNWVDIESKRRIWWHLASTDWIVSFMSGPRCGTYMIHPKQMTVDLPTNVDDQDIRPAGNYAQPLENAPTDMTFSILRTRISVIFREIVDAATDSGCLQEELPYDVVLAFDHRLHGIMADAPACFRTDPRSSRAPSRSPDLRLHRLIANALNRLHRPYLARGARDPKYSYSRMVCLRTARSVIELCKEMTGANEEFQHVKMWTIVHPLFNSVLVLVMDYCLNREEPRGDERKAEILEGFRLLEACQEDSALAQRGLQQMRQLLKGSASARKDKNPIHGDTDRATPPGSSNLPQHDKSSSSSPAPPVWPCLWTDPDLAPLETMDFDVDLDESQFEVLFRDFEGRHPMY.

The segment at residues 25–51 (CHFCRTKKLKCDRRFPCSNCRARRLSC) is a DNA-binding region (zn(2)-C6 fungal-type). Positions 76 to 103 (NEELSENINELKARLQRLEELISVNAEE) form a coiled coil. Positions 601 to 644 (KGSASARKDKNPIHGDTDRATPPGSSNLPQHDKSSSSSPAPPVW) are disordered. Over residues 606 to 619 (ARKDKNPIHGDTDR) the composition is skewed to basic and acidic residues.

It localises to the nucleus. Functionally, transcription factor that regulates the expression of the gene cluster that mediates the biosynthesis of agnestins, dihydroxy-xanthone metabolites. The chain is Agnestins biosynthesis cluster transcription factor AgnL11 from Paecilomyces divaricatus (Penicillium divaricatum).